The sequence spans 916 residues: Protein translocase subunit SecA (916 aa).

ATP contacts are provided by residues glutamine 88, 106-110 (GEGKT), and aspartate 519. Residues cysteine 902, cysteine 904, cysteine 913, and cysteine 914 each contribute to the Zn(2+) site.

Belongs to the SecA family. In terms of assembly, monomer and homodimer. Part of the essential Sec protein translocation apparatus which comprises SecA, SecYEG and auxiliary proteins SecDF. Other proteins may also be involved. The cofactor is Zn(2+).

Its subcellular location is the cell inner membrane. The protein resides in the cytoplasm. It catalyses the reaction ATP + H2O + cellular proteinSide 1 = ADP + phosphate + cellular proteinSide 2.. Its function is as follows. Part of the Sec protein translocase complex. Interacts with the SecYEG preprotein conducting channel. Has a central role in coupling the hydrolysis of ATP to the transfer of proteins into and across the cell membrane, serving as an ATP-driven molecular motor driving the stepwise translocation of polypeptide chains across the membrane. The sequence is that of Protein translocase subunit SecA from Treponema pallidum (strain Nichols).